The sequence spans 491 residues: Meiosis-specific nuclear structural protein 1 (491 aa).

An interaction with BBOF1 region spans residues 1-314; that stretch reads MATKKRALSF…QLEETLRQRD (314 aa). Coiled-coil stretches lie at residues 29-253 and 287-410; these read QVMN…RAQD and RVHE…AVEK. Residue tyrosine 188 is modified to Phosphotyrosine.

It belongs to the MNS1 family. In terms of assembly, able to form oligomers. Microtubule inner protein component of sperm flagellar doublet microtubules. Interacts with ODAD1. Interacts with BBOF1. As to expression, high expression in testis. Expressed in pachytene spermatocytes and post-meiotic spermatids.

It localises to the nucleus. Its subcellular location is the cytoplasm. The protein localises to the cytoskeleton. It is found in the flagellum axoneme. The protein resides in the cilium axoneme. Its function is as follows. Microtubule inner protein (MIP) part of the dynein-decorated doublet microtubules (DMTs) in cilia axoneme, which is required for motile cilia beating. May play a role in the control of meiotic division and germ cell differentiation through regulation of pairing and recombination during meiosis. Required for sperm flagella assembly. May play a role in the assembly and function of the outer dynein arm-docking complex (ODA-DC). ODA-DC mediates outer dynein arms (ODA) binding onto the axonemal doublet microtubules. This is Meiosis-specific nuclear structural protein 1 (Mns1) from Mus musculus (Mouse).